The following is a 98-amino-acid chain: Integration host factor subunit beta (98 aa).

The protein belongs to the bacterial histone-like protein family. In terms of assembly, heterodimer of an alpha and a beta chain.

Functionally, this protein is one of the two subunits of integration host factor, a specific DNA-binding protein that functions in genetic recombination as well as in transcriptional and translational control. In Marinobacter nauticus (strain ATCC 700491 / DSM 11845 / VT8) (Marinobacter aquaeolei), this protein is Integration host factor subunit beta.